The chain runs to 580 residues: Aspartate--tRNA ligase (580 aa).

Glu173 contacts L-aspartate. Residues 195 to 198 (QIYK) form an aspartate region. Arg217 contributes to the L-aspartate binding site. Residues 217 to 219 (RDE) and Gln226 each bind ATP. Position 443 (His443) interacts with L-aspartate. Glu477 contacts ATP. Arg484 is an L-aspartate binding site. An ATP-binding site is contributed by 529 to 532 (GIER).

The protein belongs to the class-II aminoacyl-tRNA synthetase family. Type 1 subfamily. In terms of assembly, homodimer.

The protein localises to the cytoplasm. The enzyme catalyses tRNA(Asp) + L-aspartate + ATP = L-aspartyl-tRNA(Asp) + AMP + diphosphate. Functionally, catalyzes the attachment of L-aspartate to tRNA(Asp) in a two-step reaction: L-aspartate is first activated by ATP to form Asp-AMP and then transferred to the acceptor end of tRNA(Asp). The chain is Aspartate--tRNA ligase from Malacoplasma penetrans (strain HF-2) (Mycoplasma penetrans).